The primary structure comprises 251 residues: Triosephosphate isomerase (251 aa).

9-11 is a binding site for substrate; that stretch reads NWK. His-95 serves as the catalytic Electrophile. Catalysis depends on Glu-167, which acts as the Proton acceptor. Substrate contacts are provided by residues Gly-173, Ser-213, and 234–235; that span reads GG.

The protein belongs to the triosephosphate isomerase family. Homodimer.

The protein resides in the cytoplasm. The enzyme catalyses D-glyceraldehyde 3-phosphate = dihydroxyacetone phosphate. Its pathway is carbohydrate biosynthesis; gluconeogenesis. It functions in the pathway carbohydrate degradation; glycolysis; D-glyceraldehyde 3-phosphate from glycerone phosphate: step 1/1. Involved in the gluconeogenesis. Catalyzes stereospecifically the conversion of dihydroxyacetone phosphate (DHAP) to D-glyceraldehyde-3-phosphate (G3P). In Trichlorobacter lovleyi (strain ATCC BAA-1151 / DSM 17278 / SZ) (Geobacter lovleyi), this protein is Triosephosphate isomerase.